The sequence spans 322 residues: NADH-quinone oxidoreductase subunit H (322 aa).

8 helical membrane passes run 15–35 (IFQS…MSVV), 81–101 (ITFL…ITII), 114–134 (IGVL…LLAG), 149–169 (ATAQ…GVVA), 184–204 (IGLW…IAGL), 237–257 (FFIG…TMFF), 265–285 (FPSY…FILI), and 299–319 (LFGW…TALI).

Belongs to the complex I subunit 1 family. NDH-1 is composed of 13 different subunits. Subunits NuoA, H, J, K, L, M, N constitute the membrane sector of the complex.

It is found in the cell membrane. The catalysed reaction is a quinone + NADH + 5 H(+)(in) = a quinol + NAD(+) + 4 H(+)(out). Functionally, NDH-1 shuttles electrons from NADH, via FMN and iron-sulfur (Fe-S) centers, to quinones in the respiratory chain. The immediate electron acceptor for the enzyme in this species is believed to be ubiquinone. Couples the redox reaction to proton translocation (for every two electrons transferred, four hydrogen ions are translocated across the cytoplasmic membrane), and thus conserves the redox energy in a proton gradient. This subunit may bind ubiquinone. In Buchnera aphidicola subsp. Baizongia pistaciae (strain Bp), this protein is NADH-quinone oxidoreductase subunit H.